The primary structure comprises 63 residues: Movement protein TGBp3 (63 aa).

A helical membrane pass occupies residues 1–21; the sequence is MIVYVLVGLSAFCIVLYLISQ. At 22-63 the chain is on the cytoplasmic side; the sequence is GQSDCVVLITGESVRVQGCRIDGEFGSVLSKLKPFGCGSFRS.

This sequence belongs to the Tymovirales TGBp3 protein family.

The protein localises to the host endoplasmic reticulum membrane. Plays a role in viral cell-to-cell propagation, by facilitating genome transport to neighboring plant cells through plasmosdesmata. May induce the formation of granular vesicles derived from the Endoplasmic reticulum, which align on actin filaments. This Solanum tuberosum (Potato) protein is Movement protein TGBp3.